Here is a 453-residue protein sequence, read N- to C-terminus: Cytochrome P450 monooxygenase PC-20 (453 aa).

A run of 2 helical transmembrane segments spans residues 5–25 and 49–69; these read LGPF…LCVI and LGVV…LFCV. Cys387 contributes to the heme binding site.

It belongs to the cytochrome P450 family. Heme is required as a cofactor.

It is found in the membrane. It functions in the pathway secondary metabolite biosynthesis. Cytochrome P450 monooxygenase; part of the gene cluster that mediates the biosynthesis of the indole diterpenes penitrems. The geranylgeranyl diphosphate (GGPP) synthase penG catalyzes the first step in penitrem biosynthesis via conversion of farnesyl pyrophosphate and isopentyl pyrophosphate into geranylgeranyl pyrophosphate (GGPP). Condensation of indole-3-glycerol phosphate with GGPP by the prenyl transferase penC then forms 3-geranylgeranylindole (3-GGI). Epoxidation by the FAD-dependent monooxygenase penM leads to a epoxidized-GGI that is substrate of the terpene cyclase penB for cyclization to yield paspaline. Paspaline is subsequently converted to 13-desoxypaxilline by the cytochrome P450 monooxygenase penP, the latter being then converted to paxilline by the cytochrome P450 monooxygenase penQ. Paxilline is converted to beta-paxitriol via C-10 ketoreduction by the short-chain dehydrogenase PC-15 which can be monoprenylated at the C-20 by the indole diterpene prenyltransferase penD. A two-step elimination (acetylation and elimination) process performed by the O-acetyltransferase PC-16 and the P.simplicissimum ptmI-ortholog not yet identified in P.crustosum, leads to the production of the prenylated form of penijanthine. The FAD-linked oxidoreductase ptmO then converts the prenylated form of penijanthine into PC-M5 which is in turn transformed into PC-M4 by the aromatic dimethylallyltransferase PC-22. A series of oxidation steps involving 4 cytochrome P450 monooxygenases (PC-21, PC-05, PC-23, PC-20) and a FAD-dependent monooxygenase (PC-14) are required for the transformation of PC-M4 to penitrems A and E. Synthesis of these final products is proposed to proceed via penitrems D and C (PC-21, PC-05, PC-14) and penitrems B and F (PC-21, PC-05, PC-14, PC-23). In Penicillium crustosum (Blue mold fungus), this protein is Cytochrome P450 monooxygenase PC-20.